Here is a 486-residue protein sequence, read N- to C-terminus: MSSLFIDGKWLAGDGEAMAKTNPADNAPLWQGRAASAAQVDAAVRAARAAFPAWARMGLEERAKVVRRFGERLTERKAELARVIAQETGKPLWEATTEVTTMVGKIDISLKALAERTGERAAAMGDAQAVLRHKPHGVVAVFGPYNFPGHLPNGHIVPALLAGNSVIFKPSELTPWTAEETVKLWAEAGLPAGVIGLVQGAKDTGVALAGHEGLDGLFFTGSSATGALLHKQFSGRPDKILALEMGGNNPLIVGEVADVDGAVHHVIQSAFVSAGQRCTCARRLLVPQGEWGDAFVARLVEVAGKLRVGKFDAEPAPFLGAVISNAAADALLKAQDDLVAAGGTPLLAMRRLEEGAAMLTPGIIDTTAAVRPDEEFFGPLLQVIRYADFDQAIAIANDTRFGLAGGVLSDSRELYDRYWLESRAGVVNWNKPLTGASSAAPFGGIGASGNHRPSAYYAADYCAYPVASLECDSLALPAQLSPGIVL.

221 to 226 (GSSATG) contributes to the NAD(+) binding site. Catalysis depends on residues glutamate 244 and cysteine 278.

Belongs to the aldehyde dehydrogenase family. AstD subfamily.

The enzyme catalyses N-succinyl-L-glutamate 5-semialdehyde + NAD(+) + H2O = N-succinyl-L-glutamate + NADH + 2 H(+). Its pathway is amino-acid degradation; L-arginine degradation via AST pathway; L-glutamate and succinate from L-arginine: step 4/5. Its function is as follows. Catalyzes the NAD-dependent reduction of succinylglutamate semialdehyde into succinylglutamate. The polypeptide is N-succinylglutamate 5-semialdehyde dehydrogenase (Chromobacterium violaceum (strain ATCC 12472 / DSM 30191 / JCM 1249 / CCUG 213 / NBRC 12614 / NCIMB 9131 / NCTC 9757 / MK)).